The primary structure comprises 66 residues: Protein translocase subunit SecE (66 aa).

Residues 34–54 form a helical membrane-spanning segment; the sequence is LVVIVAVFVFSLICLVLDYGI.

It belongs to the SecE/SEC61-gamma family. As to quaternary structure, component of the Sec protein translocase complex. Heterotrimer consisting of SecY, SecE and SecG subunits. The heterotrimers can form oligomers, although 1 heterotrimer is thought to be able to translocate proteins. Interacts with the ribosome. Interacts with SecDF, and other proteins may be involved. Interacts with SecA.

It localises to the cell inner membrane. Essential subunit of the Sec protein translocation channel SecYEG. Clamps together the 2 halves of SecY. May contact the channel plug during translocation. In Rickettsia bellii (strain RML369-C), this protein is Protein translocase subunit SecE.